The chain runs to 552 residues: Hydroxylamine reductase (552 aa).

Cys-5, Cys-8, Cys-20, and Cys-27 together coordinate [2Fe-2S] cluster. His-251, Glu-275, Cys-319, Cys-407, Cys-435, Cys-460, Glu-494, and Lys-496 together coordinate hybrid [4Fe-2O-2S] cluster. At Cys-407 the chain carries Cysteine persulfide.

Belongs to the HCP family. [2Fe-2S] cluster is required as a cofactor. It depends on hybrid [4Fe-2O-2S] cluster as a cofactor.

The protein localises to the cytoplasm. The catalysed reaction is A + NH4(+) + H2O = hydroxylamine + AH2 + H(+). Catalyzes the reduction of hydroxylamine to form NH(3) and H(2)O. The polypeptide is Hydroxylamine reductase (Shigella sonnei (strain Ss046)).